Reading from the N-terminus, the 308-residue chain is tRNA pseudouridine synthase B (308 aa).

The active-site Nucleophile is Asp44.

The protein belongs to the pseudouridine synthase TruB family. Type 1 subfamily.

The catalysed reaction is uridine(55) in tRNA = pseudouridine(55) in tRNA. Functionally, responsible for synthesis of pseudouridine from uracil-55 in the psi GC loop of transfer RNAs. The polypeptide is tRNA pseudouridine synthase B (Bdellovibrio bacteriovorus (strain ATCC 15356 / DSM 50701 / NCIMB 9529 / HD100)).